The following is a 291-amino-acid chain: ATP synthase gamma chain (291 aa).

It belongs to the ATPase gamma chain family. F-type ATPases have 2 components, CF(1) - the catalytic core - and CF(0) - the membrane proton channel. CF(1) has five subunits: alpha(3), beta(3), gamma(1), delta(1), epsilon(1). CF(0) has three main subunits: a, b and c.

The protein resides in the cell inner membrane. Its function is as follows. Produces ATP from ADP in the presence of a proton gradient across the membrane. The gamma chain is believed to be important in regulating ATPase activity and the flow of protons through the CF(0) complex. The chain is ATP synthase gamma chain from Sinorhizobium medicae (strain WSM419) (Ensifer medicae).